A 985-amino-acid polypeptide reads, in one-letter code: Alanine--tRNA ligase, mitochondrial (985 aa).

The N-terminal 23 residues, 1 to 23 (MAASVAAAAGRLRRAIGRSCPWQ), are a transit peptide targeting the mitochondrion. Residues Arg105, His123, Trp205, and 235–237 (LWN) each bind ATP. Residues Asn237 and Asp260 each coordinate L-alanine. Residue Gly264 participates in ATP binding. His632, His636, Cys749, and His753 together coordinate Zn(2+).

The protein belongs to the class-II aminoacyl-tRNA synthetase family. In terms of assembly, monomer. Requires Zn(2+) as cofactor.

The protein resides in the mitochondrion. The catalysed reaction is tRNA(Ala) + L-alanine + ATP = L-alanyl-tRNA(Ala) + AMP + diphosphate. It catalyses the reaction (S)-lactate + ATP + H(+) = (S)-lactoyl-AMP + diphosphate. It carries out the reaction (S)-lactoyl-AMP + L-lysyl-[protein] = N(6)-[(S)-lactoyl]-L-lysyl-[protein] + AMP + 2 H(+). Functionally, catalyzes the attachment of alanine to tRNA(Ala) in a two-step reaction: alanine is first activated by ATP to form Ala-AMP and then transferred to the acceptor end of tRNA(Ala). Also edits incorrectly charged tRNA(Ala) via its editing domain. In presence of high levels of lactate, also acts as a protein lactyltransferase that mediates lactylation of lysine residues in target proteins, such as CGAS. Acts as an inhibitor of cGAS/STING signaling by catalyzing lactylation of CGAS, preventing the formation of liquid-like droplets in which CGAS is activated. The chain is Alanine--tRNA ligase, mitochondrial (Aars2) from Rattus norvegicus (Rat).